The chain runs to 504 residues: ATP synthase subunit beta (504 aa).

ATP is bound at residue 181–188; the sequence is GGAGVGKT.

This sequence belongs to the ATPase alpha/beta chains family. As to quaternary structure, F-type ATPases have 2 components, CF(1) - the catalytic core - and CF(0) - the membrane proton channel. CF(1) has five subunits: alpha(3), beta(3), gamma(1), delta(1), epsilon(1). CF(0) has three main subunits: a(1), b(2) and c(9-12). The alpha and beta chains form an alternating ring which encloses part of the gamma chain. CF(1) is attached to CF(0) by a central stalk formed by the gamma and epsilon chains, while a peripheral stalk is formed by the delta and b chains.

It is found in the cell inner membrane. It catalyses the reaction ATP + H2O + 4 H(+)(in) = ADP + phosphate + 5 H(+)(out). Its function is as follows. Produces ATP from ADP in the presence of a proton gradient across the membrane. The catalytic sites are hosted primarily by the beta subunits. The polypeptide is ATP synthase subunit beta (Ehrlichia ruminantium (strain Welgevonden)).